Here is a 368-residue protein sequence, read N- to C-terminus: 4-hydroxy-3-methylbut-2-en-1-yl diphosphate synthase (flavodoxin) (368 aa).

The [4Fe-4S] cluster site is built by cysteine 271, cysteine 274, cysteine 306, and glutamate 313.

Belongs to the IspG family. [4Fe-4S] cluster is required as a cofactor.

It carries out the reaction (2E)-4-hydroxy-3-methylbut-2-enyl diphosphate + oxidized [flavodoxin] + H2O + 2 H(+) = 2-C-methyl-D-erythritol 2,4-cyclic diphosphate + reduced [flavodoxin]. It functions in the pathway isoprenoid biosynthesis; isopentenyl diphosphate biosynthesis via DXP pathway; isopentenyl diphosphate from 1-deoxy-D-xylulose 5-phosphate: step 5/6. In terms of biological role, converts 2C-methyl-D-erythritol 2,4-cyclodiphosphate (ME-2,4cPP) into 1-hydroxy-2-methyl-2-(E)-butenyl 4-diphosphate. The sequence is that of 4-hydroxy-3-methylbut-2-en-1-yl diphosphate synthase (flavodoxin) from Mannheimia succiniciproducens (strain KCTC 0769BP / MBEL55E).